Reading from the N-terminus, the 138-residue chain is Basic phospholipase A2 chain HDP-2P (138 aa).

Positions 1–16 (MRILWIVAVCLIGVEG) are cleaved as a signal peptide. Intrachain disulfides connect Cys-42/Cys-131, Cys-44/Cys-60, Cys-59/Cys-111, Cys-65/Cys-138, Cys-66/Cys-104, Cys-73/Cys-97, and Cys-91/Cys-102. Tyr-43, Gly-45, and Gly-47 together coordinate Ca(2+). Residue His-63 is part of the active site. Asp-64 contacts Ca(2+). Residue Asp-105 is part of the active site.

As to quaternary structure, heterodimer of an acidic and a basic chain; non-covalently linked. The toxic basic protein has phospholipase A2 activity (chain HDP-2P) and the non-toxic acidic protein functions as its inhibitor (chain HPD-1I (AC A4VBF0)). It depends on Ca(2+) as a cofactor. In terms of tissue distribution, expressed by the venom gland.

The protein localises to the secreted. It carries out the reaction a 1,2-diacyl-sn-glycero-3-phosphocholine + H2O = a 1-acyl-sn-glycero-3-phosphocholine + a fatty acid + H(+). Enzymatic activity and neurotoxicity are inhibited by Triton X-100. Triton X-100 has been determined to be located in the center of the hydrophobic channel of the enzyme. In terms of biological role, monomer: snake venom phospholipase A2 (PLA2) that affects neuromuscular transmission presynaptically. It has catalytic activity, anticoagulant activity and weakly inhibits ADP-induced platelet aggregation. PLA2 catalyzes the calcium-dependent hydrolysis of the 2-acyl groups in 3-sn-phosphoglycerides. Heterodimer: shows the same activities as the monomer, but with a lower potency. The polypeptide is Basic phospholipase A2 chain HDP-2P (Vipera nikolskii (Nikolsky's adder)).